The primary structure comprises 274 residues: Large ribosomal subunit protein uL2 (274 aa).

2 disordered regions span residues 28–53 (APYAPLLEKNSKSGGRNNNGRITVRH) and 223–274 (VAMN…RRNK). A compositionally biased stretch (low complexity) spans 39-48 (KSGGRNNNGR).

It belongs to the universal ribosomal protein uL2 family. In terms of assembly, part of the 50S ribosomal subunit. Forms a bridge to the 30S subunit in the 70S ribosome.

Its function is as follows. One of the primary rRNA binding proteins. Required for association of the 30S and 50S subunits to form the 70S ribosome, for tRNA binding and peptide bond formation. It has been suggested to have peptidyltransferase activity; this is somewhat controversial. Makes several contacts with the 16S rRNA in the 70S ribosome. In Pseudoalteromonas atlantica (strain T6c / ATCC BAA-1087), this protein is Large ribosomal subunit protein uL2.